A 1220-amino-acid chain; its full sequence is von Willebrand factor A domain-containing protein 5B1 (1220 aa).

Positions 1–18 (MPGLLNWITGAALPLTAS) are cleaved as a signal peptide. The VIT domain maps to 19–149 (DVTSCVSGYA…NVTIFISTSS (131 aa)). Residue N140 is glycosylated (N-linked (GlcNAc...) asparagine). Residues 361–529 (EFIFLIDRSS…RLQPKMVKSL (169 aa)) form the VWFA domain. N650 carries an N-linked (GlcNAc...) asparagine glycan. A disordered region spans residues 715–807 (NSGQDLNQGP…SPSRPATPAP (93 aa)). The segment covering 757 to 774 (VRERTSDSRSPGDLEPSH) has biased composition (basic and acidic residues). The span at 796–807 (RASPSRPATPAP) shows a compositional bias: low complexity. The residue at position 881 (Y881) is a Phosphotyrosine. Disordered regions lie at residues 937–962 (RGTSSGFGRPQTMLGEDSAPGNGKFQ) and 976–995 (EARSPGREKHGASEGPQRSL). N1017 carries N-linked (GlcNAc...) asparagine glycosylation. The span at 1093–1111 (TTRPSESKTPSPQLCTSSP) shows a compositional bias: polar residues. The disordered stretch occupies residues 1093–1115 (TTRPSESKTPSPQLCTSSPPRHP).

It localises to the secreted. The protein is von Willebrand factor A domain-containing protein 5B1 (VWA5B1) of Homo sapiens (Human).